We begin with the raw amino-acid sequence, 925 residues long: Protein PDC2 (925 aa).

One can recognise an HTH CENPB-type domain in the interval 63–138 (DANRLRKPNN…LSKMDVNISV (76 aa)). Disordered regions lie at residues 510–596 (DNNQ…RNSS), 674–693 (NEKAASDQNKSTDELPSSTA), and 904–925 (PTGGSNLPDSNNLHLPGNTGFF). Over residues 513–537 (QNHLSMSQASHNPDYNSNHSNNAIE) the composition is skewed to polar residues. Residues 538–563 (NTNNRGSNNNNNNNGSSNNINDNDSS) are compositionally biased toward low complexity. Polar residues predominate over residues 565–596 (KYLQQNTVDNSTKTGNPGQPNISSMESQRNSS). Over residues 674 to 686 (NEKAASDQNKSTD) the composition is skewed to basic and acidic residues. Residues 904–916 (PTGGSNLPDSNNL) show a composition bias toward polar residues.

Essential for the synthesis of pyruvate decarboxylase. May be important for a high basal level of PDC gene expression or play a positive role in the autoregulation control of PDC1 and PDC5. The polypeptide is Protein PDC2 (PDC2) (Saccharomyces cerevisiae (strain ATCC 204508 / S288c) (Baker's yeast)).